A 143-amino-acid chain; its full sequence is Synuclein (143 aa).

3 repeat units span residues 20–30 (EKTKQGVQDAA), 31–41 (EKTKQGVQDAA), and 42–52 (EKTKEGVMYVG). Positions 20 to 78 (EKTKQGVQDAAEKTKQGVQDAAEKTKEGVMYVGTKTKEGVVQSVNTVTEKTKEQANVVG) are 5 X 11 AA tandem repeats of [EGST]-K-T-K-[EQ]-[GQ]-[VA]-X(4). One copy of the 4; approximate repeat lies at 53-67 (TKTKEGVVQSVNTVT). Repeat 5 spans residues 68–78 (EKTKEQANVVG). Residues 113-143 (REIPAEQVAEGKQTTQEPLVEATEATEETGK) are disordered.

This sequence belongs to the synuclein family. Nervous system tissue. Found in the electric lobe, the brain and the spinal cord.

The protein resides in the nucleus. Functionally, may have a role in synaptic regulation or signal transduction. This Tetronarce californica (Pacific electric ray) protein is Synuclein.